Consider the following 395-residue polypeptide: Subtilisin-like protease 9 (395 aa).

An N-terminal signal peptide occupies residues M1–T20. A propeptide spanning residues S21–L120 is cleaved from the precursor. The 82-residue stretch at S36–M117 folds into the Inhibitor I9 domain. Residues S128 to A395 form the Peptidase S8 domain. Residues D160 and H191 each act as charge relay system in the active site. Residue N252 is glycosylated (N-linked (GlcNAc...) asparagine). S341 (charge relay system) is an active-site residue. The N-linked (GlcNAc...) asparagine glycan is linked to N391.

Belongs to the peptidase S8 family.

The protein localises to the secreted. Functionally, secreted subtilisin-like serine protease with keratinolytic activity that contributes to pathogenicity. This Arthroderma otae (strain ATCC MYA-4605 / CBS 113480) (Microsporum canis) protein is Subtilisin-like protease 9 (SUB9).